Consider the following 2962-residue polypeptide: Sex determination and dosage compensation protein sdc-2 (2962 aa).

2 disordered regions span residues 1–28 (MSDE…ADPD) and 1061–1110 (DKRS…QVDP). Residues 15–27 (SFNESDSPDEADP) show a composition bias toward acidic residues. Coiled coils occupy residues 995–1085 (LESA…LADK) and 1140–1268 (REER…KRVS). 2 disordered regions span residues 1535-1554 (PASL…GSPV) and 2198-2227 (LDSS…NQLD). The segment covering 2212-2225 (FEDSPSEDENDENQ) has biased composition (acidic residues).

Component of the SDC complex, which consists of sdc-1, sdc-2 and sdc-3. Within the complex, interacts with sdc-1 and sdc-3. Expressed in hermaphrodites (XX), but absent in males (XO) (at protein level).

It localises to the chromosome. Its function is as follows. Component of the SDC complex that functions in sex determination and in X chromosome dosage compensation specifically in hermaphrodite (XX) animals. Required for the recruitment of the condensin I-like dosage compensation complex to the male sex-determining autosomal gene her-1, thereby contributing to its repression and initiating hermaphrodite sexual development. Plays a central role in X-chromosome recognition and in the recruitment and assembly of the dosage compensation complex and the dosage compensation protein dpy-21 onto the X chromosomes in hermaphrodites, which leads to a reduction of X-linked gene transcription and an equalization of X-linked gene expression between the sexes. May confer protection against toxicity induced by heavy metals such as arsenite. The chain is Sex determination and dosage compensation protein sdc-2 from Caenorhabditis elegans.